The primary structure comprises 1620 residues: ALK tyrosine kinase receptor (1620 aa).

An N-terminal signal peptide occupies residues 1–18; it reads MGAIGLLWLLPLLLSTAA. Over 19-1038 the chain is Extracellular; the sequence is VGSGMGTGQR…PHLPLSLILS (1020 aa). The heparin-binding region stretch occupies residues 48-70; it reads RLQRKSLAVDFVVPSLFRVYARD. 10 N-linked (GlcNAc...) asparagine glycosylation sites follow: Asn169, Asn244, Asn285, Asn324, Asn411, Asn424, Asn445, Asn563, Asn571, and Asn627. The region spanning 264 to 427 is the MAM 1 domain; it reads LECSFDFPCE…DFFALKNCSE (164 aa). Residues 437 to 473 enclose the LDL-receptor class A domain; that stretch reads LQSSFTCWNGTVLQLGQACDFHQDCAQGEDESQMCRK. An MAM 2 domain is found at 478-636; the sequence is FYCNFEDGFC…NISISLDCYL (159 aa). The segment at 650 to 674 is disordered; the sequence is PKSRNLFERNPNKELKPGENSPRQT. Positions 654–666 are enriched in basic and acidic residues; it reads NLFERNPNKELKP. A disulfide bridge connects residues Cys688 and Cys701. Asn709 carries N-linked (GlcNAc...) asparagine glycosylation. Residues Cys783 and Cys794 are joined by a disulfide bond. Residues Asn808, Asn863, Asn864, and Asn886 are each glycosylated (N-linked (GlcNAc...) asparagine). Cys906 and Cys928 are joined by a disulfide. Asn986 is a glycosylation site (N-linked (GlcNAc...) asparagine). Cystine bridges form between Cys987–Cys995, Cys990–Cys1006, and Cys1008–Cys1021. The interval 987-1025 is EGF-like; sequence CSHCEVDECHMDPESHKVICFCDHGTVLAEDGVSCIVSP. A helical transmembrane segment spans residues 1039–1059; sequence VVTSALVAALVLAFSGIMIVY. Over 1060–1620 the chain is Cytoplasmic; the sequence is RRKHQELQAM…SKNSMNQPGP (561 aa). Residues Tyr1078, Tyr1092, and Tyr1096 each carry the phosphotyrosine modification. Residues 1116–1392 enclose the Protein kinase domain; sequence ITLIRGLGHG…IEYCTQDPDV (277 aa). Position 1124 (His1124) interacts with ATP. Position 1131 is a phosphotyrosine (Tyr1131). ATP-binding positions include Lys1150 and 1197-1199; that span reads ELM. Asp1249 functions as the Proton acceptor in the catalytic mechanism. Asp1270 contributes to the ATP binding site. Tyr1278 carries the post-translational modification Phosphotyrosine. Positions 1408–1463 are disordered; sequence EEKVPVRPKDPEGVPPLLVSQQAKREEERSPAAPPPLPTTSSGKAAKKPTAAEISV. Residues 1410-1419 show a composition bias toward basic and acidic residues; that stretch reads KVPVRPKDPE. A Phosphotyrosine modification is found at Tyr1507. Residues 1514–1540 form a disordered region; sequence KPTKKNNPIAKKEPHDRGNLGLEGSCT. A Phosphotyrosine modification is found at Tyr1604.

This sequence belongs to the protein kinase superfamily. Tyr protein kinase family. Insulin receptor subfamily. As to quaternary structure, homodimer; homodimerizes following heparin- and ligand-binding. Interacts with CBL, IRS1, PIK3R1 and PLCG1. Interacts with FRS2 and SHC1. Interacts with PTN and MDK. In terms of processing, phosphorylated at tyrosine residues by autocatalysis, which activates kinase activity. In cells not stimulated by a ligand, receptor protein tyrosine phosphatase beta and zeta complex (PTPRB/PTPRZ1) dephosphorylates ALK at the sites in ALK that are undergoing autophosphorylation through autoactivation. Phosphorylation at Tyr-1507 is critical for SHC1 association. Post-translationally, N-glycosylated. Expressed in brain and CNS. Also expressed in the small intestine and testis, but not in normal lymphoid cells.

The protein resides in the cell membrane. The enzyme catalyses L-tyrosyl-[protein] + ATP = O-phospho-L-tyrosyl-[protein] + ADP + H(+). Activated upon ALKAL2 ligand-binding. ALKAL2-driven activation is coupled with heparin-binding. Following ligand-binding, homodimerizes and autophosphorylates, activating its kinase activity. Inactivated through dephosphorylation by receptor protein tyrosine phosphatase beta and zeta complex (PTPRB/PTPRZ1) when there is no stimulation by a ligand. Staurosporine, crizotinib and CH5424802 act as inhibitors of ALK kinase activity. In terms of biological role, neuronal receptor tyrosine kinase that is essentially and transiently expressed in specific regions of the central and peripheral nervous systems and plays an important role in the genesis and differentiation of the nervous system. Also acts as a key thinness protein involved in the resistance to weight gain: in hypothalamic neurons, controls energy expenditure acting as a negative regulator of white adipose tissue lipolysis and sympathetic tone to fine-tune energy homeostasis. Following activation by ALKAL2 ligand at the cell surface, transduces an extracellular signal into an intracellular response. In contrast, ALKAL1 is not a potent physiological ligand for ALK. Ligand-binding to the extracellular domain induces tyrosine kinase activation, leading to activation of the mitogen-activated protein kinase (MAPK) pathway. Phosphorylates almost exclusively at the first tyrosine of the Y-x-x-x-Y-Y motif. Induces tyrosine phosphorylation of CBL, FRS2, IRS1 and SHC1, as well as of the MAP kinases MAPK1/ERK2 and MAPK3/ERK1. ALK activation may also be regulated by pleiotrophin (PTN) and midkine (MDK). PTN-binding induces MAPK pathway activation, which is important for the anti-apoptotic signaling of PTN and regulation of cell proliferation. MDK-binding induces phosphorylation of the ALK target insulin receptor substrate (IRS1), activates mitogen-activated protein kinases (MAPKs) and PI3-kinase, resulting also in cell proliferation induction. Drives NF-kappa-B activation, probably through IRS1 and the activation of the AKT serine/threonine kinase. Recruitment of IRS1 to activated ALK and the activation of NF-kappa-B are essential for the autocrine growth and survival signaling of MDK. This chain is ALK tyrosine kinase receptor, found in Homo sapiens (Human).